The sequence spans 547 residues: Chaperonin GroEL (547 aa).

Residues 30-33 (TLGP), 87-91 (DGTTT), G414, 478-480 (DAL), and D494 each bind ATP.

The protein belongs to the chaperonin (HSP60) family. As to quaternary structure, forms a cylinder of 14 subunits composed of two heptameric rings stacked back-to-back. Interacts with the co-chaperonin GroES.

It is found in the cytoplasm. The catalysed reaction is ATP + H2O + a folded polypeptide = ADP + phosphate + an unfolded polypeptide.. Together with its co-chaperonin GroES, plays an essential role in assisting protein folding. The GroEL-GroES system forms a nano-cage that allows encapsulation of the non-native substrate proteins and provides a physical environment optimized to promote and accelerate protein folding. This Desulforudis audaxviator (strain MP104C) protein is Chaperonin GroEL.